A 292-amino-acid chain; its full sequence is MNKYTINDITRASGGFAMLAVDQREAMRMMFAAAGAPAPVADSVLTDFKVNAAKALSPYASAILVDQQFCYRQVVEQNAIAKSCAMIVAADEFIPGNGIPVDSVVIDRKINPLQIKQDGGKALKLLVLWRSDEDAQQRLDMVKEFNELCHSHGLVSIIEPVVRPPRRGDKFDREQAIIDAAKELGDSGADLYKVEMPLYGKGPQQELLCASQRLNDHINMPWVILSSGVDEKLFPRAVRVAMTAGASGFLAGRAVWASVVGLPDNELMLRDVCAPKLQQLGDIVDEMMAKRR.

The Schiff-base intermediate with substrate role is filled by lysine 193.

Belongs to the aldolase LacD family. In terms of assembly, homotetramer.

The enzyme catalyses 6-deoxy-6-sulfo-D-fructose 1-phosphate = (2S)-3-sulfolactaldehyde + dihydroxyacetone phosphate. Functionally, cleaves 6-deoxy-6-sulfo-D-fructose 1-phosphate (SFP) to form dihydroxyacetone phosphate (DHAP) and 3-sulfolactaldehyde (SLA). The polypeptide is Sulfofructosephosphate aldolase (yihT) (Escherichia coli (strain K12)).